A 69-amino-acid polypeptide reads, in one-letter code: Light-harvesting protein B-1015 beta chain (69 aa).

Residues 2-21 lie on the Cytoplasmic side of the membrane; it reads ADLKPSLTGLTEEEAKEFHG. Residues His-20 and His-38 each contribute to the a bacteriochlorophyll site. Residues 22 to 44 traverse the membrane as a helical segment; sequence IFVTSTVLYLATAVIVHYLVWTA. Topologically, residues 45–56 are periplasmic; sequence RPWIAPIPKGWV. A propeptide spanning residues 57–69 is cleaved from the precursor; sequence NLEGVQSALSYLV.

Belongs to the antenna complex beta subunit family. In terms of assembly, the core complex is formed by different alpha and beta chains, binding bacteriochlorophyll molecules, and arranged most probably in tetrameric structures disposed around the reaction center. The non-pigmented gamma chains may constitute additional components.

The protein resides in the cell inner membrane. Antenna complexes are light-harvesting systems, which transfer the excitation energy to the reaction centers. The chain is Light-harvesting protein B-1015 beta chain (pufB) from Blastochloris viridis (Rhodopseudomonas viridis).